Consider the following 109-residue polypeptide: CRISPR-associated endoribonuclease Cas2 (109 aa).

Aspartate 8 serves as a coordination point for Mg(2+).

Belongs to the CRISPR-associated endoribonuclease Cas2 protein family. As to quaternary structure, homodimer, forms a heterotetramer with a Cas1 homodimer. Mg(2+) serves as cofactor.

Functionally, CRISPR (clustered regularly interspaced short palindromic repeat), is an adaptive immune system that provides protection against mobile genetic elements (viruses, transposable elements and conjugative plasmids). CRISPR clusters contain sequences complementary to antecedent mobile elements and target invading nucleic acids. CRISPR clusters are transcribed and processed into CRISPR RNA (crRNA). Functions as a ssRNA-specific endoribonuclease. Involved in the integration of spacer DNA into the CRISPR cassette. The sequence is that of CRISPR-associated endoribonuclease Cas2 from Streptococcus mutans serotype c (strain ATCC 700610 / UA159).